Here is a 351-residue protein sequence, read N- to C-terminus: Phosphoribosylformylglycinamidine cyclo-ligase (351 aa).

The protein belongs to the AIR synthase family.

The protein localises to the cytoplasm. It catalyses the reaction 2-formamido-N(1)-(5-O-phospho-beta-D-ribosyl)acetamidine + ATP = 5-amino-1-(5-phospho-beta-D-ribosyl)imidazole + ADP + phosphate + H(+). Its pathway is purine metabolism; IMP biosynthesis via de novo pathway; 5-amino-1-(5-phospho-D-ribosyl)imidazole from N(2)-formyl-N(1)-(5-phospho-D-ribosyl)glycinamide: step 2/2. The chain is Phosphoribosylformylglycinamidine cyclo-ligase from Burkholderia pseudomallei (strain 668).